Reading from the N-terminus, the 504-residue chain is Amyloid-beta A4 precursor protein-binding family B member 3 (504 aa).

Residues 29–61 (TGLPPGWRKIRDAAGTYYWHVPSGSTQWQRPTW) form the WW domain. PID domains are found at residues 111-278 (EPGA…QVEL) and 283-438 (SQAA…RTSS).

As to quaternary structure, interacts with APP (via intracellular domain). Interacts with APLP1 and APLP2 (via intracellular domain). As to expression, expressed predominantly in brain and testis.

It localises to the cytoplasm. Its subcellular location is the nucleus. Its function is as follows. May modulate the internalization of amyloid-beta precursor protein. The chain is Amyloid-beta A4 precursor protein-binding family B member 3 from Rattus norvegicus (Rat).